The primary structure comprises 396 residues: S-adenosylmethionine synthase (396 aa).

H16 lines the ATP pocket. D18 lines the Mg(2+) pocket. E44 lines the K(+) pocket. E57 and Q100 together coordinate L-methionine. The tract at residues 100–110 is flexible loop; it reads QSVDINQGVDR. ATP is bound by residues 165–167, 231–232, D240, 246–247, A263, and K267; these read DAK, KF, and RK. D240 is an L-methionine binding site. K271 provides a ligand contact to L-methionine.

Belongs to the AdoMet synthase family. As to quaternary structure, homotetramer; dimer of dimers. The cofactor is Mg(2+). K(+) is required as a cofactor.

It localises to the cytoplasm. The enzyme catalyses L-methionine + ATP + H2O = S-adenosyl-L-methionine + phosphate + diphosphate. It functions in the pathway amino-acid biosynthesis; S-adenosyl-L-methionine biosynthesis; S-adenosyl-L-methionine from L-methionine: step 1/1. In terms of biological role, catalyzes the formation of S-adenosylmethionine (AdoMet) from methionine and ATP. The overall synthetic reaction is composed of two sequential steps, AdoMet formation and the subsequent tripolyphosphate hydrolysis which occurs prior to release of AdoMet from the enzyme. This is S-adenosylmethionine synthase from Azotobacter vinelandii (strain DJ / ATCC BAA-1303).